A 169-amino-acid polypeptide reads, in one-letter code: UPF0725 protein At2g19200 (169 aa).

The protein belongs to the UPF0725 (EMB2204) family.

This chain is UPF0725 protein At2g19200, found in Arabidopsis thaliana (Mouse-ear cress).